A 288-amino-acid chain; its full sequence is NADPH-dependent aldehyde reductase 1, chloroplastic (288 aa).

The segment covering Met1–Met18 has biased composition (basic and acidic residues). The tract at residues Met1 to Ser32 is disordered. The segment covering Ser20–Ser32 has biased composition (polar residues). Ser47–Gly71 lines the NADP(+) pocket. Ser179 lines the substrate pocket. Tyr192 functions as the Proton acceptor in the catalytic mechanism.

This sequence belongs to the short-chain dehydrogenases/reductases (SDR) family.

The protein resides in the plastid. It localises to the chloroplast. Its function is as follows. Aldehyde reductase that catalyzes the reduction of the aldehyde carbonyl groups on saturated and alpha,beta-unsaturated aldehydes with more than 5 carbons. No activity on alpha,beta-unsaturated ketones. Can use propionaldehyde, butyraldehyde, methylglyoxal, (e)-2-pentenal, (E)-2-hexenal, (Z)-3-hexenal and (E)-2-nonenal as substrates, but not propenal (acrolein), crotonaldehyde, 2-butanone, 3-buten-2-one or 1-penten-3-one. May act as a short alcohol-polyol-sugar dehydrogenase possibly related to carbohydrate metabolism and the acquisition of desiccation tolerance. May also be involved in signal transduction. The chain is NADPH-dependent aldehyde reductase 1, chloroplastic from Arabidopsis thaliana (Mouse-ear cress).